The chain runs to 58 residues: Potassium channel toxin Ts16 (58 aa).

An N-terminal signal peptide occupies residues 1-16 (MHSSVFILILFSLAVI). Cystine bridges form between C29/C51, C34/C47, and C38/C53.

In terms of tissue distribution, expressed by the venom gland.

It localises to the secreted. In terms of biological role, blocks potassium channels. The sequence is that of Potassium channel toxin Ts16 from Tityus serrulatus (Brazilian scorpion).